A 60-amino-acid chain; its full sequence is uncharacterized protein (60 aa).

Positions 27 to 50 (VKNNNNNNNNNNNNNNNNNNNNNK) are disordered. Low complexity predominate over residues 29–49 (NNNNNNNNNNNNNNNNNNNNN).

This is an uncharacterized protein from Dictyostelium discoideum (Social amoeba).